A 241-amino-acid chain; its full sequence is Pre-rRNA-processing protein pno1 (241 aa).

The tract at residues Ala-48–Pro-71 is disordered. At Thr-52 the chain carries Phosphothreonine. One can recognise a KH domain in the interval Gly-162–Val-214.

It belongs to the PNO1 family. In terms of assembly, component of the small ribosomal subunit, ribosomal RNA processing complex (SSU RRP complex).

The protein resides in the cytoplasm. It localises to the nucleus. Its subcellular location is the nucleolus. Required for small ribosomal subunit (SSU) synthesis. Has a role in the processing of early nucleolar and late cytoplasmic pre-RNA species. The chain is Pre-rRNA-processing protein pno1 (rbp28) from Schizosaccharomyces pombe (strain 972 / ATCC 24843) (Fission yeast).